An 872-amino-acid polypeptide reads, in one-letter code: DNA mismatch repair protein MutS (872 aa).

Position 622–629 (622–629) interacts with ATP; the sequence is GPNMAGKS.

The protein belongs to the DNA mismatch repair MutS family.

In terms of biological role, this protein is involved in the repair of mismatches in DNA. It is possible that it carries out the mismatch recognition step. This protein has a weak ATPase activity. In Geotalea uraniireducens (strain Rf4) (Geobacter uraniireducens), this protein is DNA mismatch repair protein MutS.